The primary structure comprises 118 residues: Lutropin subunit beta (118 aa).

6 disulfide bridges follow: Cys9-Cys57, Cys23-Cys72, Cys26-Cys110, Cys34-Cys88, Cys38-Cys90, and Cys93-Cys100. The N-linked (GlcNAc...) asparagine glycan is linked to Asn13.

Belongs to the glycoprotein hormones subunit beta family. Heterodimer of a common alpha chain and a unique beta chain which confers biological specificity to thyrotropin, lutropin, follitropin and gonadotropin.

The protein resides in the secreted. Functionally, promotes spermatogenesis and ovulation by stimulating the testes and ovaries to synthesize steroids. In Balaenoptera acutorostrata (Common minke whale), this protein is Lutropin subunit beta (LHB).